A 241-amino-acid chain; its full sequence is Uridylate kinase (241 aa).

ATP is bound at residue K15–G18. Residues G23–G28 are involved in allosteric activation by GTP. Residue G57 participates in UMP binding. G58 and R62 together coordinate ATP. UMP contacts are provided by residues D77 and T138 to T145. The ATP site is built by T165, Y171, and D174.

Belongs to the UMP kinase family. In terms of assembly, homohexamer.

Its subcellular location is the cytoplasm. The enzyme catalyses UMP + ATP = UDP + ADP. Its pathway is pyrimidine metabolism; CTP biosynthesis via de novo pathway; UDP from UMP (UMPK route): step 1/1. Allosterically activated by GTP. Inhibited by UTP. In terms of biological role, catalyzes the reversible phosphorylation of UMP to UDP. This Pectobacterium atrosepticum (strain SCRI 1043 / ATCC BAA-672) (Erwinia carotovora subsp. atroseptica) protein is Uridylate kinase.